Reading from the N-terminus, the 119-residue chain is Large ribosomal subunit protein uL22 (119 aa).

It belongs to the universal ribosomal protein uL22 family. As to quaternary structure, part of the 50S ribosomal subunit.

This protein binds specifically to 23S rRNA; its binding is stimulated by other ribosomal proteins, e.g. L4, L17, and L20. It is important during the early stages of 50S assembly. It makes multiple contacts with different domains of the 23S rRNA in the assembled 50S subunit and ribosome. In terms of biological role, the globular domain of the protein is located near the polypeptide exit tunnel on the outside of the subunit, while an extended beta-hairpin is found that lines the wall of the exit tunnel in the center of the 70S ribosome. The polypeptide is Large ribosomal subunit protein uL22 (Trichormus variabilis (strain ATCC 29413 / PCC 7937) (Anabaena variabilis)).